Here is a 106-residue protein sequence, read N- to C-terminus: Large ribosomal subunit protein uL24 (106 aa).

It belongs to the universal ribosomal protein uL24 family. Part of the 50S ribosomal subunit.

In terms of biological role, one of two assembly initiator proteins, it binds directly to the 5'-end of the 23S rRNA, where it nucleates assembly of the 50S subunit. Its function is as follows. One of the proteins that surrounds the polypeptide exit tunnel on the outside of the subunit. The chain is Large ribosomal subunit protein uL24 from Bordetella bronchiseptica (strain ATCC BAA-588 / NCTC 13252 / RB50) (Alcaligenes bronchisepticus).